We begin with the raw amino-acid sequence, 201 residues long: Small ribosomal subunit protein uS5 (201 aa).

Residues 1–28 (MARGEQQRGEGGQRRDRRDRNAPEERVD) are disordered. The S5 DRBM domain occupies 31 to 94 (IVEKLVHINR…EEAKKTMIRV (64 aa)). The interval 173–201 (QIAAKRGKKVGDILGRRADGASAPEAIEG) is disordered. The span at 181–191 (KVGDILGRRAD) shows a compositional bias: basic and acidic residues.

It belongs to the universal ribosomal protein uS5 family. In terms of assembly, part of the 30S ribosomal subunit. Contacts proteins S4 and S8.

Functionally, with S4 and S12 plays an important role in translational accuracy. In terms of biological role, located at the back of the 30S subunit body where it stabilizes the conformation of the head with respect to the body. The sequence is that of Small ribosomal subunit protein uS5 from Caulobacter vibrioides (strain ATCC 19089 / CIP 103742 / CB 15) (Caulobacter crescentus).